Reading from the N-terminus, the 603-residue chain is Geraniol synthase, chloroplastic (603 aa).

The N-terminal 50 residues, 1–50 (MALQMIAPFLSSFLPNPRHSLAAHGLTHQKCVSKHISCSTTTPTYSTTVP), are a transit peptide targeting the chloroplast. (2E)-geranyl diphosphate-binding residues include Arg301, Asp338, Asp342, Arg479, and Asp482. Mg(2+)-binding residues include Asp338 and Asp342. Residues 338 to 342 (DDIYD) carry the DDXXD motif motif. Mg(2+)-binding residues include Asp482, Thr486, and Glu490.

This sequence belongs to the terpene synthase family. Tpsb subfamily. In terms of assembly, homodimer. It depends on Mg(2+) as a cofactor. Requires Mn(2+) as cofactor. As to expression, expressed in the oil cells of the leaves.

The protein localises to the plastid. The protein resides in the chloroplast. The enzyme catalyses (2E)-geranyl diphosphate + H2O = (2E)-geraniol + diphosphate. Its pathway is secondary metabolite biosynthesis; terpenoid biosynthesis. Its function is as follows. Monoterpene synthase that catalyzes the formation of geraniol from geranyl diphosphate. The chain is Geraniol synthase, chloroplastic (GerS) from Cinnamomum tenuipile (Alseodaphne mollis).